Here is a 193-residue protein sequence, read N- to C-terminus: Acyl carrier protein phosphodiesterase (193 aa).

This sequence belongs to the AcpH family.

The catalysed reaction is holo-[ACP] + H2O = apo-[ACP] + (R)-4'-phosphopantetheine + H(+). Its function is as follows. Converts holo-ACP to apo-ACP by hydrolytic cleavage of the phosphopantetheine prosthetic group from ACP. The polypeptide is Acyl carrier protein phosphodiesterase (Yersinia pestis).